Reading from the N-terminus, the 156-residue chain is Ribonuclease H (156 aa).

An RNase H type-1 domain is found at 3-144; sequence ELKQIRIYTD…CDTLAREAAE (142 aa). Positions 12, 50, 72, and 136 each coordinate Mg(2+).

The protein belongs to the RNase H family. In terms of assembly, monomer. It depends on Mg(2+) as a cofactor.

It is found in the cytoplasm. It carries out the reaction Endonucleolytic cleavage to 5'-phosphomonoester.. Functionally, endonuclease that specifically degrades the RNA of RNA-DNA hybrids. In Shewanella amazonensis (strain ATCC BAA-1098 / SB2B), this protein is Ribonuclease H.